The sequence spans 320 residues: Probable NAD(P)H-dependent D-xylose reductase xyl1 (320 aa).

Residue Y50 is the Proton donor of the active site. Residue H112 participates in substrate binding. NAD(+) contacts are provided by residues S167–N168, S216–E225, and K272–N282.

The protein belongs to the aldo/keto reductase family.

The catalysed reaction is xylitol + NAD(+) = D-xylose + NADH + H(+). The enzyme catalyses xylitol + NADP(+) = D-xylose + NADPH + H(+). It functions in the pathway carbohydrate metabolism; D-xylose degradation. Functionally, catalyzes the initial reaction in the xylose utilization pathway by reducing D-xylose into xylitol. Xylose is a major component of hemicelluloses such as xylan. Most fungi utilize D-xylose via three enzymatic reactions, xylose reductase (XR), xylitol dehydrogenase (XDH), and xylulokinase, to form xylulose 5-phosphate, which enters pentose phosphate pathway. This Aspergillus terreus (strain NIH 2624 / FGSC A1156) protein is Probable NAD(P)H-dependent D-xylose reductase xyl1 (xyl1).